Reading from the N-terminus, the 255-residue chain is Proteasome subunit alpha (255 aa).

The segment covering 190-201 has biased composition (polar residues); the sequence is PSTSGASGNGET. Positions 190–255 are disordered; the sequence is PSTSGASGNG…DKSSGDGEQN (66 aa). Residues 202–217 are compositionally biased toward basic and acidic residues; it reads EPSKLEVAILDRERPG.

This sequence belongs to the peptidase T1A family. In terms of assembly, the 20S proteasome core is composed of 14 alpha and 14 beta subunits that assemble into four stacked heptameric rings, resulting in a barrel-shaped structure. The two inner rings, each composed of seven catalytic beta subunits, are sandwiched by two outer rings, each composed of seven alpha subunits. The catalytic chamber with the active sites is on the inside of the barrel. Has a gated structure, the ends of the cylinder being occluded by the N-termini of the alpha-subunits. Is capped by the proteasome-associated ATPase, ARC.

It is found in the cytoplasm. Its pathway is protein degradation; proteasomal Pup-dependent pathway. Its activity is regulated as follows. The formation of the proteasomal ATPase ARC-20S proteasome complex, likely via the docking of the C-termini of ARC into the intersubunit pockets in the alpha-rings, may trigger opening of the gate for substrate entry. Interconversion between the open-gate and close-gate conformations leads to a dynamic regulation of the 20S proteasome proteolysis activity. Functionally, component of the proteasome core, a large protease complex with broad specificity involved in protein degradation. The sequence is that of Proteasome subunit alpha from Saccharomonospora viridis (strain ATCC 15386 / DSM 43017 / JCM 3036 / CCUG 5913 / NBRC 12207 / NCIMB 9602 / P101) (Thermoactinomyces viridis).